Reading from the N-terminus, the 1522-residue chain is Lysophospholipase nte1 (1522 aa).

The disordered stretch occupies residues Met1–Ser24. Topologically, residues Met1–Gly65 are cytoplasmic. Positions Ser15 to Ser24 are enriched in low complexity. A helical membrane pass occupies residues Trp66 to Ile86. Residues Thr87 to Thr108 are Lumenal-facing. A helical membrane pass occupies residues Met109–Ile129. Residues Arg130–Ile1522 are Cytoplasmic-facing. 3 disordered regions span residues Val308–Pro384, Arg523–Pro544, and Thr757–Arg776. Basic residues predominate over residues Glu369–Ser381. Residues Gly680–Ser800 and Arg840–Arg960 contribute to the a nucleoside 3',5'-cyclic phosphate site. In terms of domain architecture, PNPLA spans Leu1219 to Lys1383. The short motif at Gly1223–Gly1228 is the GXGXXG element. Positions Gly1250–Gly1254 match the GXSXG motif. The Nucleophile role is filled by Ser1252. Asp1370 functions as the Proton acceptor in the catalytic mechanism. Positions Asp1370 to Gly1372 match the DGA/G motif. The tract at residues Leu1501–Ile1522 is disordered.

It belongs to the NTE family.

The protein resides in the endoplasmic reticulum membrane. The catalysed reaction is a 1-acyl-sn-glycero-3-phosphocholine + H2O = sn-glycerol 3-phosphocholine + a fatty acid + H(+). Inhibited by organophosphorus esters. Intracellular phospholipase B that catalyzes the double deacylation of phosphatidylcholine (PC) to glycerophosphocholine (GroPCho). Plays an important role in membrane lipid homeostasis. Responsible for the rapid PC turnover in response to inositol, elevated temperatures, or when choline is present in the growth medium. In Aspergillus fumigatus (strain ATCC MYA-4609 / CBS 101355 / FGSC A1100 / Af293) (Neosartorya fumigata), this protein is Lysophospholipase nte1 (nte1).